A 51-amino-acid polypeptide reads, in one-letter code: MPSHKSFMIKKKLGKKMRQNRPIPNWIRLRTDNKIRYNAKRRHWRRTKLGF.

The interval 1 to 21 (MPSHKSFMIKKKLGKKMRQNR) is disordered. A compositionally biased stretch (basic residues) spans 7 to 19 (FMIKKKLGKKMRQ).

This sequence belongs to the eukaryotic ribosomal protein eL39 family.

This chain is Large ribosomal subunit protein eL39y (RPL39B), found in Arabidopsis thaliana (Mouse-ear cress).